The sequence spans 458 residues: Probable asparagine--tRNA ligase, cytoplasmic (458 aa).

Belongs to the class-II aminoacyl-tRNA synthetase family.

The protein resides in the cytoplasm. It carries out the reaction tRNA(Asn) + L-asparagine + ATP = L-asparaginyl-tRNA(Asn) + AMP + diphosphate + H(+). This chain is Probable asparagine--tRNA ligase, cytoplasmic, found in Enterocytozoon bieneusi (strain H348) (Microsporidian parasite).